The chain runs to 194 residues: Outer membrane protein A (194 aa).

A signal peptide spans 1 to 24 (MNKPSKFALALAFAAVTASGVASA). Residues 30 to 38 (WRNPYGNVW) form a beta stranded membrane-spanning segment. The OmpA-like domain occupies 77–193 (MAAKVVFNAD…RVEIEIVGSR (117 aa)).

This sequence belongs to the outer membrane OOP (TC 1.B.6) superfamily.

It is found in the cell outer membrane. Functionally, structural protein that may protect the integrity of the bacterium. The sequence is that of Outer membrane protein A from Bordetella avium.